The primary structure comprises 350 residues: 4-hydroxy-3-methylbut-2-enyl diphosphate reductase (350 aa).

Cys-19 provides a ligand contact to [4Fe-4S] cluster. Residues His-48 and His-84 each contribute to the (2E)-4-hydroxy-3-methylbut-2-enyl diphosphate site. Residues His-48 and His-84 each coordinate dimethylallyl diphosphate. The isopentenyl diphosphate site is built by His-48 and His-84. Cys-106 is a [4Fe-4S] cluster binding site. His-134 lines the (2E)-4-hydroxy-3-methylbut-2-enyl diphosphate pocket. Residue His-134 coordinates dimethylallyl diphosphate. His-134 contacts isopentenyl diphosphate. The Proton donor role is filled by Glu-136. Thr-175 lines the (2E)-4-hydroxy-3-methylbut-2-enyl diphosphate pocket. Cys-205 provides a ligand contact to [4Fe-4S] cluster. (2E)-4-hydroxy-3-methylbut-2-enyl diphosphate is bound by residues Ser-233, Ser-234, Asn-235, and Ser-278. Ser-233, Ser-234, Asn-235, and Ser-278 together coordinate dimethylallyl diphosphate. Positions 233, 234, 235, and 278 each coordinate isopentenyl diphosphate.

It belongs to the IspH family. [4Fe-4S] cluster is required as a cofactor.

It carries out the reaction isopentenyl diphosphate + 2 oxidized [2Fe-2S]-[ferredoxin] + H2O = (2E)-4-hydroxy-3-methylbut-2-enyl diphosphate + 2 reduced [2Fe-2S]-[ferredoxin] + 2 H(+). The enzyme catalyses dimethylallyl diphosphate + 2 oxidized [2Fe-2S]-[ferredoxin] + H2O = (2E)-4-hydroxy-3-methylbut-2-enyl diphosphate + 2 reduced [2Fe-2S]-[ferredoxin] + 2 H(+). It participates in isoprenoid biosynthesis; dimethylallyl diphosphate biosynthesis; dimethylallyl diphosphate from (2E)-4-hydroxy-3-methylbutenyl diphosphate: step 1/1. The protein operates within isoprenoid biosynthesis; isopentenyl diphosphate biosynthesis via DXP pathway; isopentenyl diphosphate from 1-deoxy-D-xylulose 5-phosphate: step 6/6. Functionally, catalyzes the conversion of 1-hydroxy-2-methyl-2-(E)-butenyl 4-diphosphate (HMBPP) into a mixture of isopentenyl diphosphate (IPP) and dimethylallyl diphosphate (DMAPP). Acts in the terminal step of the DOXP/MEP pathway for isoprenoid precursor biosynthesis. This chain is 4-hydroxy-3-methylbut-2-enyl diphosphate reductase, found in Brucella anthropi (strain ATCC 49188 / DSM 6882 / CCUG 24695 / JCM 21032 / LMG 3331 / NBRC 15819 / NCTC 12168 / Alc 37) (Ochrobactrum anthropi).